The primary structure comprises 441 residues: E3 ubiquitin-protein ligase APD1 (441 aa).

The next 2 membrane-spanning stretches (helical) occupy residues 60-80 (SNLYCFSLALLIWFFASFILI) and 305-325 (IAYVIGTGVVICFMLVAIQFC). The segment at 390–429 (CAICFDVPRDCFFLPCGHSVSCYECGTTMQEADGSCPICR) adopts an RING-type zinc-finger fold.

Expressed in the shoot apical meristems (SAM), root tips and inflorescences, and, at low levels, in floral buds and pollen.

Its subcellular location is the endomembrane system. It localises to the vacuole membrane. The catalysed reaction is S-ubiquitinyl-[E2 ubiquitin-conjugating enzyme]-L-cysteine + [acceptor protein]-L-lysine = [E2 ubiquitin-conjugating enzyme]-L-cysteine + N(6)-ubiquitinyl-[acceptor protein]-L-lysine.. It functions in the pathway protein modification; protein ubiquitination. Functionally, involved in pollen mitosis II (PMII) regulation during male gametogenesis. In Arabidopsis thaliana (Mouse-ear cress), this protein is E3 ubiquitin-protein ligase APD1.